The following is an 82-amino-acid chain: MFSRVALRAAPRQQPFSLVARRTFQTTRAQLSSPYHYPEGPRSNLPFNPKTRFFWFRYLMYCVVGFGSPVAIAVWQTYRPRS.

The transit peptide at 1–31 directs the protein to the mitochondrion; sequence MFSRVALRAAPRQQPFSLVARRTFQTTRAQL. The Mitochondrial matrix portion of the chain corresponds to 32-52; sequence SSPYHYPEGPRSNLPFNPKTR. The chain crosses the membrane as a helical span at residues 53–75; sequence FFWFRYLMYCVVGFGSPVAIAVW. Residues 76 to 82 lie on the Mitochondrial intermembrane side of the membrane; that stretch reads QTYRPRS.

This sequence belongs to the cytochrome c oxidase VIIc family. Component of the cytochrome c oxidase (complex IV, CIV), a multisubunit enzyme composed of 11 subunits. The complex is composed of a catalytic core of 3 subunits Cox1, Cox2 and Cox3, encoded in the mitochondrial DNA, and 8 supernumerary subunits Cox4, Cox5a/Cox5, Cox6, Cox7, Cox8, Cox7a/Cox9, Cox6b/Cox12 and Cox6a/Cox13, which are encoded in the nuclear genome. The complex exists as a monomer or a dimer and forms respiratory supercomplexes (SCs) in the inner mitochondrial membrane with NADH-ubiquinone oxidoreductase (complex I, CI) and ubiquinol-cytochrome c oxidoreductase (cytochrome b-c1 complex, complex III, CIII), resulting in various different assemblies (supercomplexes I(1)IV(1), I(1)III(3)IV(2), III(2)IV(1) and III(2)IV(2) as well as larger supercomplexes of compositions like I(1)III(2)IV(5-6)).

Its subcellular location is the mitochondrion inner membrane. The protein operates within energy metabolism; oxidative phosphorylation. Its function is as follows. Component of the cytochrome c oxidase, the last enzyme in the mitochondrial electron transport chain which drives oxidative phosphorylation. The respiratory chain contains 3 multisubunit complexes succinate dehydrogenase (complex II, CII), ubiquinol-cytochrome c oxidoreductase (cytochrome b-c1 complex, complex III, CIII) and cytochrome c oxidase (complex IV, CIV), that cooperate to transfer electrons derived from NADH and succinate to molecular oxygen, creating an electrochemical gradient over the inner membrane that drives transmembrane transport and the ATP synthase. Cytochrome c oxidase is the component of the respiratory chain that catalyzes the reduction of oxygen to water. Electrons originating from reduced cytochrome c in the intermembrane space (IMS) are transferred via the dinuclear copper A center (CU(A)) of Cox2 and heme A of Cox1 to the active site in Cox1, a binuclear center (BNC) formed by heme A3 and copper B (CU(B)). The BNC reduces molecular oxygen to 2 water molecules using 4 electrons from cytochrome c in the IMS and 4 protons from the mitochondrial matrix. The protein is Cytochrome c oxidase subunit 8, mitochondrial (cox-15) of Neurospora crassa (strain ATCC 24698 / 74-OR23-1A / CBS 708.71 / DSM 1257 / FGSC 987).